An 809-amino-acid polypeptide reads, in one-letter code: Valine--tRNA ligase (809 aa).

A 'HIGH' region motif is present at residues 60-70 (PFTSGELHMGH). Residues 546 to 550 (RMSKS) carry the 'KMSKS' region motif. Lys-549 contributes to the ATP binding site.

It belongs to the class-I aminoacyl-tRNA synthetase family. ValS type 2 subfamily.

The protein resides in the cytoplasm. It catalyses the reaction tRNA(Val) + L-valine + ATP = L-valyl-tRNA(Val) + AMP + diphosphate. Catalyzes the attachment of valine to tRNA(Val). As ValRS can inadvertently accommodate and process structurally similar amino acids such as threonine, to avoid such errors, it has a 'posttransfer' editing activity that hydrolyzes mischarged Thr-tRNA(Val) in a tRNA-dependent manner. The protein is Valine--tRNA ligase of Sulfurisphaera tokodaii (strain DSM 16993 / JCM 10545 / NBRC 100140 / 7) (Sulfolobus tokodaii).